We begin with the raw amino-acid sequence, 400 residues long: 3-phenylpropionate/cinnamic acid dioxygenase ferredoxin--NAD(+) reductase component (400 aa).

Position 5–36 (5–36 (TIIIVGGGQAAAMAAASLRQQGFTGELHLFSD)) interacts with FAD. 146 to 174 (SVVIVGAGTIGLELAASATQRGCKATVIE) lines the NAD(+) pocket.

Belongs to the bacterial ring-hydroxylating dioxygenase ferredoxin reductase family. As to quaternary structure, this dioxygenase system consists of four proteins: the two subunits of the hydroxylase component (HcaE and HcaF), a ferredoxin (HcaC) and a ferredoxin reductase (HcaD). The cofactor is FAD.

The enzyme catalyses 2 reduced [2Fe-2S]-[ferredoxin] + NAD(+) + H(+) = 2 oxidized [2Fe-2S]-[ferredoxin] + NADH. Its pathway is aromatic compound metabolism; 3-phenylpropanoate degradation. Its function is as follows. Part of the multicomponent 3-phenylpropionate dioxygenase, that converts 3-phenylpropionic acid (PP) and cinnamic acid (CI) into 3-phenylpropionate-dihydrodiol (PP-dihydrodiol) and cinnamic acid-dihydrodiol (CI-dihydrodiol), respectively. The polypeptide is 3-phenylpropionate/cinnamic acid dioxygenase ferredoxin--NAD(+) reductase component (Escherichia coli O7:K1 (strain IAI39 / ExPEC)).